Here is a 203-residue protein sequence, read N- to C-terminus: Translation initiation factor IF-3 (203 aa).

The protein belongs to the IF-3 family. As to quaternary structure, monomer.

It localises to the cytoplasm. Functionally, IF-3 binds to the 30S ribosomal subunit and shifts the equilibrium between 70S ribosomes and their 50S and 30S subunits in favor of the free subunits, thus enhancing the availability of 30S subunits on which protein synthesis initiation begins. The polypeptide is Translation initiation factor IF-3 (Corynebacterium efficiens (strain DSM 44549 / YS-314 / AJ 12310 / JCM 11189 / NBRC 100395)).